The following is a 423-amino-acid chain: G-protein coupled receptor 83 (423 aa).

An N-terminal signal peptide occupies residues 1 to 16 (MVPHLLLLCLLPLVRA). Topologically, residues 18–71 (EPHEGRADEQSAEAALAVPNASHFFSWNNYTFSDWQNFVGRRRYGAESQNPTVK) are extracellular. N-linked (GlcNAc...) asparagine glycosylation is found at Asn37 and Asn46. A helical membrane pass occupies residues 72–92 (ALLIVAYSFIIVFSLFGNVLV). Residues 93-107 (CHVIFKNQRMHSATS) are Cytoplasmic-facing. The helical transmembrane segment at 108-129 (LFIVNLAVADIMITLLNTPFTL) threads the bilayer. The Extracellular segment spans residues 130–145 (VRFVNSTWIFGKGMCH). A glycan (N-linked (GlcNAc...) asparagine) is linked at Asn134. An intrachain disulfide couples Cys144 to Cys224. The chain crosses the membrane as a helical span at residues 146-167 (VSRFAQYCSLHVSALTLTAIAV). Residues 168–186 (DRHQVIMHPLKPRISITKG) lie on the Cytoplasmic side of the membrane. Residues 187–208 (VIYIAVIWTMATFFSLPHAICQ) form a helical membrane-spanning segment. At 209–238 (KLFTFKYSEDIVRSLCLPDFPEPADLFWKY) the chain is on the extracellular side. The chain crosses the membrane as a helical span at residues 239–260 (LDLATFILLYILPLLIISVAYA). The Cytoplasmic portion of the chain corresponds to 261–293 (RVAKKLWLCNMIGDVTTEQYFALRRKKKKTIKM). A helical transmembrane segment spans residues 294–315 (LMLVVVLFALCWFPLNCYVLLL). Residues 316–327 (SSKVIRTNNALY) lie on the Extracellular side of the membrane. A helical membrane pass occupies residues 328 to 348 (FAFHWFAMSSTCYNPFIYCWL). The Cytoplasmic segment spans residues 349 to 423 (NENFRIELKA…SSVEPIVTMS (75 aa)). Residues 402–414 (PTSQLQSGKTDLS) show a composition bias toward polar residues. The segment at 402-423 (PTSQLQSGKTDLSSVEPIVTMS) is disordered.

The protein belongs to the G-protein coupled receptor 1 family. Highly expressed in the brain and spinal cord, and found in lower concentrations in the thymus and other tissues.

The protein resides in the cell membrane. G-protein coupled receptor for PEN, a neuropeptide produced from the precursor protein, proSAAS (encoded by PCSK1N). Acts through a G(i)- and G(q)-alpha-alpha-mediated pathway in response to PEN. Plays a role in food intake and body weight regulation. May contribute to the regulation of anxiety-related behaviors. The chain is G-protein coupled receptor 83 from Homo sapiens (Human).